A 200-amino-acid polypeptide reads, in one-letter code: Pyrrolidone-carboxylate peptidase (200 aa).

Catalysis depends on residues E78, C141, and H165.

Belongs to the peptidase C15 family. In terms of assembly, homotetramer.

The protein localises to the cytoplasm. The catalysed reaction is Release of an N-terminal pyroglutamyl group from a polypeptide, the second amino acid generally not being Pro.. Its function is as follows. Removes 5-oxoproline from various penultimate amino acid residues except L-proline. This chain is Pyrrolidone-carboxylate peptidase, found in Lactobacillus helveticus (strain DPC 4571).